A 418-amino-acid chain; its full sequence is Serine proteinase inhibitor 2.4 (418 aa).

The signal sequence occupies residues 1-28 (MAFIAALGIFMAGICPAVLCFPNGTLGR). N-linked (GlcNAc...) asparagine glycans are attached at residues asparagine 23, asparagine 38, asparagine 104, and asparagine 269.

It belongs to the serpin family.

The protein localises to the secreted. The chain is Serine proteinase inhibitor 2.4 from Apodemus sylvaticus (European woodmouse).